Here is a 548-residue protein sequence, read N- to C-terminus: Dihydroxy-acid dehydratase (548 aa).

A Mg(2+)-binding site is contributed by D78. A [2Fe-2S] cluster-binding site is contributed by C119. Positions 120 and 121 each coordinate Mg(2+). K121 bears the N6-carboxylysine mark. C185 contributes to the [2Fe-2S] cluster binding site. E438 lines the Mg(2+) pocket. S464 acts as the Proton acceptor in catalysis.

This sequence belongs to the IlvD/Edd family. In terms of assembly, homodimer. [2Fe-2S] cluster is required as a cofactor. Mg(2+) serves as cofactor.

It carries out the reaction (2R)-2,3-dihydroxy-3-methylbutanoate = 3-methyl-2-oxobutanoate + H2O. It catalyses the reaction (2R,3R)-2,3-dihydroxy-3-methylpentanoate = (S)-3-methyl-2-oxopentanoate + H2O. It functions in the pathway amino-acid biosynthesis; L-isoleucine biosynthesis; L-isoleucine from 2-oxobutanoate: step 3/4. Its pathway is amino-acid biosynthesis; L-valine biosynthesis; L-valine from pyruvate: step 3/4. Its function is as follows. Functions in the biosynthesis of branched-chain amino acids. Catalyzes the dehydration of (2R,3R)-2,3-dihydroxy-3-methylpentanoate (2,3-dihydroxy-3-methylvalerate) into 2-oxo-3-methylpentanoate (2-oxo-3-methylvalerate) and of (2R)-2,3-dihydroxy-3-methylbutanoate (2,3-dihydroxyisovalerate) into 2-oxo-3-methylbutanoate (2-oxoisovalerate), the penultimate precursor to L-isoleucine and L-valine, respectively. The protein is Dihydroxy-acid dehydratase of Methanothrix thermoacetophila (strain DSM 6194 / JCM 14653 / NBRC 101360 / PT) (Methanosaeta thermophila).